A 361-amino-acid polypeptide reads, in one-letter code: tRNA/tmRNA (uracil-C(5))-methyltransferase (361 aa).

S-adenosyl-L-methionine-binding residues include glutamine 183, tyrosine 211, asparagine 216, glutamate 232, and aspartate 294. Residue cysteine 319 is the Nucleophile of the active site. Glutamate 353 serves as the catalytic Proton acceptor.

Belongs to the class I-like SAM-binding methyltransferase superfamily. RNA M5U methyltransferase family. TrmA subfamily.

The enzyme catalyses uridine(54) in tRNA + S-adenosyl-L-methionine = 5-methyluridine(54) in tRNA + S-adenosyl-L-homocysteine + H(+). It catalyses the reaction uridine(341) in tmRNA + S-adenosyl-L-methionine = 5-methyluridine(341) in tmRNA + S-adenosyl-L-homocysteine + H(+). Its function is as follows. Dual-specificity methyltransferase that catalyzes the formation of 5-methyluridine at position 54 (m5U54) in all tRNAs, and that of position 341 (m5U341) in tmRNA (transfer-mRNA). This Acinetobacter baumannii (strain ACICU) protein is tRNA/tmRNA (uracil-C(5))-methyltransferase.